The primary structure comprises 697 residues: MAMTSWPSTGRQRRHQLASMLLLVLVVVGIYVPVFALLPSLSYTPQSLPSAIPQDEKMISRKFYIKDDNFWKDGNRFQIIGGDLHYFRVLPEYWEDRLLRANALGLNTIQVYVPWNLHEPKPGKMVFEGIGDLVSFLKLCEKLDFLVMLRAGPYICGEWDLGGFPAWLLAVKPRLQLRTSDPVYLKLVERWWDVLLPKVFPLLYSNGGPVIMVQIENEYGSYGNDKAYLRKLVSMARGHLGDDIIVYTTDGGTKETLDKGTVPVADVYSAVDFSTGDDPWPIFKLQKKFNAPGRSPPLSSEFYTGWLTHWGEKITKTDAEFTAASLEKILSRNGSAVLYMVHGGTNFGFYNGANTGSEESDYKPDLTSYDYDAPIKESGDIDNPKFQALQRVIKKYNASPHPISPSNKQRKAYGSIKMQMTTSLFDLVRMTDPADVITSANPISMESVGQMFGFLLYESSYIAKKSGNTLRIPKVHDRAQVFVSCLSQDVDVGVLRYIGTTERWNNQPISLPTIECTTNTSLFILVENMGRVNYGPYIFDDKGILSSVYLDGQILHGWKMIPIPFHNLNQEPNLTFEMQHTKNRSKKFELTNDVGRKEPALFAGEFSINSEEEIKDTYLSFNGWGKGVAFVNEFNIGRYWPSVGPQCNLYVPAPLLKRGKNTLVVFELESPHLELSLEAVDHQDFTCGSNVSKVNQL.

The N-terminal stretch at M1–F35 is a signal peptide. Catalysis depends on E218, which acts as the Proton donor. The active-site Nucleophile is the E301. N-linked (GlcNAc...) asparagine glycans are attached at residues N333, N519, N573, N583, and N690.

Belongs to the glycosyl hydrolase 35 family. In terms of tissue distribution, ubiquitous, with higher expression levels in roots and siliques.

It is found in the secreted. It localises to the extracellular space. The protein resides in the apoplast. The enzyme catalyses Hydrolysis of terminal non-reducing beta-D-galactose residues in beta-D-galactosides.. The chain is Beta-galactosidase 17 (BGAL17) from Arabidopsis thaliana (Mouse-ear cress).